We begin with the raw amino-acid sequence, 179 residues long: Peptidyl-tRNA hydrolase 2, mitochondrial (179 aa).

Residues 15–37 (STLGLAVGVACGMCLGWSLRVCF) form a helical membrane-spanning segment. Residues Lys47, Lys76, Lys81, Lys95, Lys106, Lys115, Lys171, and Lys177 each participate in a glycyl lysine isopeptide (Lys-Gly) (interchain with G-Cter in ubiquitin) cross-link.

Belongs to the PTH2 family. As to quaternary structure, monomer. Ubiquitinated by PRKN during mitophagy, leading to its degradation and enhancement of mitophagy. Deubiquitinated by USP30.

The protein resides in the mitochondrion outer membrane. It catalyses the reaction an N-acyl-L-alpha-aminoacyl-tRNA + H2O = an N-acyl-L-amino acid + a tRNA + H(+). Functionally, peptidyl-tRNA hydrolase which releases tRNAs from the ribosome during protein synthesis. Promotes caspase-independent apoptosis by regulating the function of two transcriptional regulators, AES and TLE1. The chain is Peptidyl-tRNA hydrolase 2, mitochondrial (PTRH2) from Homo sapiens (Human).